Reading from the N-terminus, the 357-residue chain is MGSLESEKTVTGYAARDSSGHLSPYTYTLRNKGPEDVIVRVIYCGICHSDLVQMHNEMGMSNYPMVPGHEVVGVVTEIGSEVKKFKVGEHVGVGCIVGSCRSCSNCNGSMEQYCSKRIWTYNDVNHDGTPTQGGFASSMVVDQMFVVRIPENLPLEQAAPLLCAGVTVYSPMKHFGMTEPGKKCGILGLGGVGHMGVKIAKAFGLHVTVISSSDKKKEEALEVLGADAYLVSKDAEKMQEAAESLDYIMDTIPVAHPLEPYLALLKTNGKLVMLGVVPEPLHFVTPLLILGRRSIAGSFIGSMEETQETLDFCAEKKVSSMIEVVGLDYINTAMERLVKNDVRYRFVVDVARSNLDK.

Cys-47 contacts Zn(2+). Ser-49 lines the NADP(+) pocket. His-69, Glu-70, Cys-100, Cys-103, Cys-106, Cys-114, and Cys-163 together coordinate Zn(2+). NADP(+)-binding positions include Thr-167, 188 to 193, 211 to 216, Thr-251, Gly-275, and 298 to 300; these read GLGGVG, SSSDKK, and SFI.

The protein belongs to the zinc-containing alcohol dehydrogenase family. Homodimer. Requires Zn(2+) as cofactor.

The catalysed reaction is (E)-cinnamyl alcohol + NADP(+) = (E)-cinnamaldehyde + NADPH + H(+). It carries out the reaction (E)-coniferol + NADP(+) = (E)-coniferaldehyde + NADPH + H(+). The enzyme catalyses (E)-sinapyl alcohol + NADP(+) = (E)-sinapaldehyde + NADPH + H(+). It catalyses the reaction (E)-4-coumaroyl alcohol + NADP(+) = (E)-4-coumaraldehyde + NADPH + H(+). The catalysed reaction is (E)-caffeyl alcohol + NADP(+) = (E)-caffeyl aldehyde + NADPH + H(+). It participates in aromatic compound metabolism; phenylpropanoid biosynthesis. In terms of biological role, involved in lignin biosynthesis. Catalyzes the final step specific for the production of lignin monomers. Catalyzes the NADPH-dependent reduction of coniferaldehyde, 5-hydroxyconiferaldehyde, sinapaldehyde, 4-coumaraldehyde and caffeyl aldehyde to their respective alcohols. The polypeptide is Probable cinnamyl alcohol dehydrogenase 2 (CAD2) (Picea abies (Norway spruce)).